Consider the following 231-residue polypeptide: Beta-casein (231 aa).

The signal sequence occupies residues 1-15; it reads MKVFILACLVALALA. Serine 24 carries the phosphoserine modification. Threonine 27 bears the Phosphothreonine mark. A phosphoserine mark is found at serine 29, serine 31, and serine 32.

The protein belongs to the beta-casein family. In terms of tissue distribution, mammary gland specific. Secreted in milk.

The protein localises to the secreted. Important role in determination of the surface properties of the casein micelles. The chain is Beta-casein (Csn2) from Rattus norvegicus (Rat).